The chain runs to 243 residues: UPF0246 protein SpyM3_1790 (243 aa).

This sequence belongs to the UPF0246 family.

The polypeptide is UPF0246 protein SpyM3_1790 (Streptococcus pyogenes serotype M3 (strain ATCC BAA-595 / MGAS315)).